Here is a 147-residue protein sequence, read N- to C-terminus: Globin (147 aa).

Positions 2–147 constitute a Globin domain; it reads SFSAAQVDTV…SVANGIGQYQ (146 aa). Residues histidine 64 and histidine 95 each coordinate heme b.

This sequence belongs to the globin family. As to quaternary structure, homodimer or homooligomer.

The polypeptide is Globin (Aequiyoldia eightsii (Antarctic yoldia)).